The chain runs to 89 residues: Nitrogen regulatory protein (89 aa).

A PTS EIIA type-2 domain is found at 6–89 (TILTPGRSLV…ALLHLEAPID (84 aa)). His-68 serves as the catalytic Tele-phosphohistidine intermediate.

It localises to the cytoplasm. In terms of biological role, seems to have a role in regulating nitrogen assimilation. This chain is Nitrogen regulatory protein (ptsN), found in Pseudomonas putida (Arthrobacter siderocapsulatus).